Here is a 23-residue protein sequence, read N- to C-terminus: NADP phosphatase 2 (23 aa).

Homodimer.

Its subcellular location is the cytoplasm. The polypeptide is NADP phosphatase 2 (Arthrobacter sp. (strain KM)).